Reading from the N-terminus, the 200-residue chain is Pyridoxine/pyridoxamine 5'-phosphate oxidase (200 aa).

Residues 48 to 53 (RMVLLK), 63 to 64 (YT), lysine 70, and glutamine 92 contribute to the FMN site. Substrate is bound at residue lysine 53. Substrate is bound by residues tyrosine 110, arginine 114, and serine 118. FMN is bound by residues 127–128 (QS) and tryptophan 171. Residue 177–179 (RLH) participates in substrate binding. Arginine 181 serves as a coordination point for FMN.

Belongs to the pyridoxamine 5'-phosphate oxidase family. In terms of assembly, homodimer. FMN serves as cofactor.

It carries out the reaction pyridoxamine 5'-phosphate + O2 + H2O = pyridoxal 5'-phosphate + H2O2 + NH4(+). The enzyme catalyses pyridoxine 5'-phosphate + O2 = pyridoxal 5'-phosphate + H2O2. Its pathway is cofactor metabolism; pyridoxal 5'-phosphate salvage; pyridoxal 5'-phosphate from pyridoxamine 5'-phosphate: step 1/1. It functions in the pathway cofactor metabolism; pyridoxal 5'-phosphate salvage; pyridoxal 5'-phosphate from pyridoxine 5'-phosphate: step 1/1. Its function is as follows. Catalyzes the oxidation of either pyridoxine 5'-phosphate (PNP) or pyridoxamine 5'-phosphate (PMP) into pyridoxal 5'-phosphate (PLP). This Cereibacter sphaeroides (strain ATCC 17023 / DSM 158 / JCM 6121 / CCUG 31486 / LMG 2827 / NBRC 12203 / NCIMB 8253 / ATH 2.4.1.) (Rhodobacter sphaeroides) protein is Pyridoxine/pyridoxamine 5'-phosphate oxidase.